A 186-amino-acid chain; its full sequence is Ribosome-recycling factor (186 aa).

It belongs to the RRF family.

The protein localises to the cytoplasm. In terms of biological role, responsible for the release of ribosomes from messenger RNA at the termination of protein biosynthesis. May increase the efficiency of translation by recycling ribosomes from one round of translation to another. The protein is Ribosome-recycling factor of Chlorobium phaeovibrioides (strain DSM 265 / 1930) (Prosthecochloris vibrioformis (strain DSM 265)).